The primary structure comprises 532 residues: Autoinducer-2 kinase (532 aa).

The protein belongs to the FGGY kinase family.

The protein resides in the cytoplasm. It catalyses the reaction (S)-4,5-dihydroxypentane-2,3-dione + ATP = (2S)-2-hydroxy-3,4-dioxopentyl phosphate + ADP + H(+). Catalyzes the phosphorylation of autoinducer-2 (AI-2) to phospho-AI-2, which subsequently inactivates the transcriptional regulator LsrR and leads to the transcription of the lsr operon. Phosphorylates the ring-open form of (S)-4,5-dihydroxypentane-2,3-dione (DPD), which is the precursor to all AI-2 signaling molecules, at the C5 position. The protein is Autoinducer-2 kinase of Klebsiella pneumoniae subsp. pneumoniae (strain ATCC 700721 / MGH 78578).